The following is a 296-amino-acid chain: Homoserine kinase (296 aa).

85–95 (PLSRGLGSSAA) lines the ATP pocket.

The protein belongs to the GHMP kinase family. Homoserine kinase subfamily.

It localises to the cytoplasm. The enzyme catalyses L-homoserine + ATP = O-phospho-L-homoserine + ADP + H(+). It participates in amino-acid biosynthesis; L-threonine biosynthesis; L-threonine from L-aspartate: step 4/5. In terms of biological role, catalyzes the ATP-dependent phosphorylation of L-homoserine to L-homoserine phosphate. This chain is Homoserine kinase, found in Clostridium acetobutylicum (strain ATCC 824 / DSM 792 / JCM 1419 / IAM 19013 / LMG 5710 / NBRC 13948 / NRRL B-527 / VKM B-1787 / 2291 / W).